Here is a 310-residue protein sequence, read N- to C-terminus: Olfactory receptor 5P1 (310 aa).

Residues 1 to 25 (MEPGNHTAVTKFILLGLTDDPTLCV) are Extracellular-facing. Asn5 carries an N-linked (GlcNAc...) asparagine glycan. The helical transmembrane segment at 26–46 (IFFVFFLGIYIVTLVGNISII) threads the bilayer. At 47–54 (NLVRSCPQ) the chain is on the cytoplasmic side. The helical transmembrane segment at 55 to 75 (LQTPMYMFLSHLAFVDIGYST) threads the bilayer. Residues 76 to 99 (SVTPIMLIGFIVHETGLPVHACEA) lie on the Extracellular side of the membrane. An intrachain disulfide couples Cys97 to Cys189. The helical transmembrane segment at 100 to 120 (QLCSVVTFGTAECFLLAAMAY) threads the bilayer. At 121–133 (DRYVAICSPLLYS) the chain is on the cytoplasmic side. Residues 134–154 (THMSSQICLLLVGASYVGGCV) traverse the membrane as a helical segment. At 155–196 (NAWTFTGCLLSLSFCGPNKIDHFFCDFSPLLKLSCSDVSIIG) the chain is on the extracellular side. The helical transmembrane segment at 197–217 (IIPSISAGSIIVVTVFVISVS) threads the bilayer. The Cytoplasmic segment spans residues 218–237 (YIYILITILKMRSTEGRHKA). Residues 238-258 (FSTCTSHLTAVTLYYGTITFI) form a helical membrane-spanning segment. Residues 259-271 (YVMPKSSYSTKQN) are Extracellular-facing. A helical transmembrane segment spans residues 272–292 (RVVSLFYTVVIPMLNPLIYSL). Residues 293–310 (RNRDVKEALRKATLRIYS) lie on the Cytoplasmic side of the membrane.

This sequence belongs to the G-protein coupled receptor 1 family.

It localises to the cell membrane. In terms of biological role, potential odorant receptor. The protein is Olfactory receptor 5P1 of Mus musculus (Mouse).